We begin with the raw amino-acid sequence, 620 residues long: Ran-binding protein 10 (620 aa).

Positions 1-38 are disordered; that stretch reads MAAATADPGAGNPQAGDSSGGDSGGGLPSPGEQELSRR. An N-acetylalanine modification is found at alanine 2. Positions 18–28 are enriched in gly residues; the sequence is SSGGDSGGGLP. Residues 35–222 form the B30.2/SPRY domain; sequence LSRRLQRLYP…VDANFGQQPF (188 aa). The 33-residue stretch at 253–285 folds into the LisH domain; that stretch reads WQAVLQNMVSSYLVHHGYCSTATAFARMTETPI. One can recognise a CTLH domain in the interval 291 to 348; the sequence is SIKNRQKIQKLVLEGRVGEAIETTQRFYPGLLEHNPNLLFMLKCRQFVEMVNGTDSEV. The segment covering 347 to 398 has biased composition (polar residues); the sequence is EVRSLSSRSPKSQDSYPGSPSLSPRHGPSSSHIHNTGADSPSCSNGVASTKN. Residues 347–460 form a disordered region; it reads EVRSLSSRSP…SDSEMEMEAE (114 aa). At serine 361 the chain carries Phosphoserine. Residue tyrosine 362 is modified to Phosphotyrosine. Phosphoserine occurs at positions 365, 367, 369, and 422. The segment covering 409–436 has biased composition (low complexity); that stretch reads SSSSSSSSSSSSSSPSSVNYSESNSTDS. The segment covering 437–450 has biased composition (polar residues); that stretch reads TKSQPHSSTSNQET. Residues serine 451 and serine 453 each carry the phosphoserine modification.

The protein belongs to the RANBP9/10 family. May form homodimers. Identified in the CTLH complex that contains GID4, RANBP9 and/or RANBP10, MKLN1, MAEA, RMND5A (or alternatively its paralog RMND5B), GID8, ARMC8, WDR26 and YPEL5. Within this complex, MAEA, RMND5A (or alternatively its paralog RMND5B), GID8, WDR26, and RANBP9 and/or RANBP10 form the catalytic core, while GID4, MKLN1, ARMC8 and YPEL5 have ancillary roles. Interacts with RAN and RANBP9. Interacts with the HGF receptor MET. Interacts with AR. Interacts with TUBB1. Interacts with YPEL5. May interact with TUBB5. Interacts with DDX4. Expressed at highest levels in spleen and liver. Expressed in megakaryocytes and platelets (at protein level).

The protein localises to the cytoplasm. The protein resides in the nucleus. May act as an adapter protein to couple membrane receptors to intracellular signaling pathways. Core component of the CTLH E3 ubiquitin-protein ligase complex that selectively accepts ubiquitin from UBE2H and mediates ubiquitination and subsequent proteasomal degradation of the transcription factor HBP1. Enhances dihydrotestosterone-induced transactivation activity of AR, as well as dexamethasone-induced transactivation activity of NR3C1, but does not affect estrogen-induced transactivation. Acts as a guanine nucleotide exchange factor (GEF) for RAN GTPase. May play an essential role in hemostasis and in maintaining microtubule dynamics with respect to both platelet shape and function. This is Ran-binding protein 10 (Ranbp10) from Mus musculus (Mouse).